Consider the following 86-residue polypeptide: Muscarinic toxin 38 (86 aa).

Residues 1 to 21 (MKTLLLTLVVVTIVCLDLGYT) form the signal peptide. Cystine bridges form between C24–C45, C38–C63, C67–C78, and C79–C84.

This sequence belongs to the three-finger toxin family. Short-chain subfamily. Aminergic toxin sub-subfamily. Monomer. As to expression, expressed by the venom gland.

Its subcellular location is the secreted. Its function is as follows. Binds to the muscarinic acetylcholine receptor (CHRM). The sequence is that of Muscarinic toxin 38 from Ophiophagus hannah (King cobra).